The primary structure comprises 430 residues: Enolase (430 aa).

Glutamine 163 contributes to the (2R)-2-phosphoglycerate binding site. The active-site Proton donor is the glutamate 205. Residues aspartate 242, glutamate 288, and aspartate 315 each coordinate Mg(2+). (2R)-2-phosphoglycerate-binding residues include lysine 340, arginine 369, serine 370, and lysine 391. Residue lysine 340 is the Proton acceptor of the active site.

It belongs to the enolase family. The cofactor is Mg(2+).

It localises to the cytoplasm. Its subcellular location is the secreted. It is found in the cell surface. The enzyme catalyses (2R)-2-phosphoglycerate = phosphoenolpyruvate + H2O. It functions in the pathway carbohydrate degradation; glycolysis; pyruvate from D-glyceraldehyde 3-phosphate: step 4/5. Functionally, catalyzes the reversible conversion of 2-phosphoglycerate (2-PG) into phosphoenolpyruvate (PEP). It is essential for the degradation of carbohydrates via glycolysis. This is Enolase from Acidobacterium capsulatum (strain ATCC 51196 / DSM 11244 / BCRC 80197 / JCM 7670 / NBRC 15755 / NCIMB 13165 / 161).